A 257-amino-acid chain; its full sequence is Probable transcriptional regulatory protein SRU_2667 (257 aa).

Residues 1–15 show a composition bias toward basic residues; the sequence is MAGHTRKWAKVKRKK. The segment at 1-25 is disordered; the sequence is MAGHTRKWAKVKRKKQKDDRRKSKV.

It belongs to the TACO1 family.

The protein localises to the cytoplasm. The protein is Probable transcriptional regulatory protein SRU_2667 of Salinibacter ruber (strain DSM 13855 / M31).